The sequence spans 653 residues: Sodium-dependent phosphate transporter 2 (653 aa).

Topologically, residues 1-5 are extracellular; that stretch reads MVLDE. The helical transmembrane segment at 6-26 threads the bilayer; sequence YMWMVIVGFIIAFVLAFSVGA. Residues 27-46 are Cytoplasmic-facing; that stretch reads NDVANSFGTAVGSGVVTLRQ. Residues 47–67 form a helical membrane-spanning segment; that stretch reads ACILASIFETIGSVLLGAKVG. Residues 68-86 are Extracellular-facing; that stretch reads ETIRKGIIDVNLYNNTVDL. The N-linked (GlcNAc...) asparagine glycan is linked to asparagine 81. The chain crosses the membrane as a helical span at residues 87 to 107; that stretch reads LMAGEVSAMVGSAVWQLIASF. Topologically, residues 108–109 are cytoplasmic; sequence LK. A helical membrane pass occupies residues 110–130; the sequence is LPVSGTHCIVGATIGFSLVAV. The Extracellular portion of the chain corresponds to 131–142; the sequence is GAHSVQWMQLVK. The helical transmembrane segment at 143-163 threads the bilayer; the sequence is IVASWFISPLLSGLMSGALFL. Residues 164 to 187 are Cytoplasmic-facing; sequence MIKFFILNKEDPVPNGLKALPVFY. Residues 188 to 208 form a helical membrane-spanning segment; sequence AATIGINVFSILFTGAPLLGL. Topologically, residues 209–217 are extracellular; the sequence is QTFPVWATA. Residues 218–238 form a helical membrane-spanning segment; that stretch reads LLSVGIAIVFALVVWFFVCPW. The Cytoplasmic segment spans residues 239 to 483; it reads MKKKIASRLK…EDKEEKDKSQ (245 aa). Positions 275-310 are disordered; sequence LPGAKGNDESVLPLTSSSPDAAVSSESVSNGNTRVP. Over residues 290–303 the composition is skewed to low complexity; sequence SSSPDAAVSSESVS. A helical membrane pass occupies residues 484 to 504; the sequence is VHLLFHFLQILTACFGSFAHG. Topologically, residues 505–532 are extracellular; the sequence is GNDVSNAIGPLVALWLIYQQGGVMQEAS. Residues 533 to 553 traverse the membrane as a helical segment; the sequence is TPVWLLLYGGVGICAGLWVWG. Over 554–572 the chain is Cytoplasmic; sequence RRVIQTMGKDLTPITPSSG. Residues 573–587 traverse the membrane as a helical segment; that stretch reads FTIELASAFTVVVAS. Residues 588-594 lie on the Extracellular side of the membrane; it reads NIGLPIS. Residues 595–610 traverse the membrane as a helical segment; the sequence is TTHCKVGSVVAVGWIR. The Cytoplasmic portion of the chain corresponds to 611–622; that stretch reads SRKAVDWRLFRN. Residues 623–643 traverse the membrane as a helical segment; the sequence is IFLAWFVTVPVAGLFSAGVMA. Residues 644-653 lie on the Extracellular side of the membrane; sequence ILQYGILPYV.

It belongs to the inorganic phosphate transporter (PiT) (TC 2.A.20) family. Homodimer.

Its subcellular location is the cell membrane. It is found in the apical cell membrane. It carries out the reaction 2 Na(+)(out) + phosphate(out) = 2 Na(+)(in) + phosphate(in). Its function is as follows. Sodium-phosphate symporter which preferentially transports the monovalent form of phosphate with a stoichiometry of two sodium ions per phosphate ion. This Xenopus laevis (African clawed frog) protein is Sodium-dependent phosphate transporter 2 (slc20a2).